The sequence spans 1434 residues: Probable deoxyribonuclease RhsA (1434 aa).

The segment at 14–42 is disordered; that stretch reads AMHAGNRPNPPDDRPQPCRGKPPTSPGKT. Helical transmembrane passes span 48-68 and 70-90; these read FLGA…VAAA and VFLV…LAVF. 3 YD repeats span residues 486–521, 592–628, and 847–876; these read YDAA…CADG, DDTG…LGRE, and YDAR…LTEV.

The protein belongs to the RHS/WapA nuclease family.

It is found in the membrane. Toxic component of a toxin-immunity protein module, which functions as a cellular contact-dependent growth inhibition (CDI) system. This protein may be a nuclease that is specifically inhibited by its cognate immunity protein RhsAI. Upon expression of the C-terminus (residues 1284-1434) in E.coli growth is inhibited, cells elongate, nucleoids condense and plasmid DNA is degraded; these effects are blocked specifically by cognate immunity protein RshIA. Cell contact is necessary for growth inhibition. This is Probable deoxyribonuclease RhsA (rhsA) from Dickeya dadantii (strain 3937) (Erwinia chrysanthemi (strain 3937)).